Here is a 172-residue protein sequence, read N- to C-terminus: Cytochrome b6-f complex iron-sulfur subunit (172 aa).

Residues 17–39 (VFLNALLSSSVGVVVVGTLYPVV) form a helical membrane-spanning segment. Residues 61 to 161 (GKPISVSELL…ATVDGDNVRF (101 aa)) enclose the Rieske domain. Cys-107, His-109, Cys-125, and His-128 together coordinate [2Fe-2S] cluster. A disulfide bond links Cys-112 and Cys-127.

Belongs to the Rieske iron-sulfur protein family. The 4 large subunits of the cytochrome b6-f complex are cytochrome b6, subunit IV (17 kDa polypeptide, PetD), cytochrome f and the Rieske protein, while the 4 small subunits are PetG, PetL, PetM and PetN. The complex functions as a dimer. Requires [2Fe-2S] cluster as cofactor.

It localises to the cellular thylakoid membrane. The catalysed reaction is 2 oxidized [plastocyanin] + a plastoquinol + 2 H(+)(in) = 2 reduced [plastocyanin] + a plastoquinone + 4 H(+)(out). In terms of biological role, component of the cytochrome b6-f complex, which mediates electron transfer between photosystem II (PSII) and photosystem I (PSI), cyclic electron flow around PSI, and state transitions. The sequence is that of Cytochrome b6-f complex iron-sulfur subunit from Synechococcus sp. (strain JA-3-3Ab) (Cyanobacteria bacterium Yellowstone A-Prime).